A 211-amino-acid chain; its full sequence is Scoloptoxin SSD43 (211 aa).

A signal peptide spans 1 to 20 (MNFVIYGVIVVLTSQLYVDG).

Post-translationally, contains 3 disulfide bonds. In terms of tissue distribution, expressed by the venom gland.

The protein resides in the secreted. Shows trypsin inhibiting activity. The protein is highly thermally stable, since its incubation in boiling water during 10 minutes does not reduce its activity. This is Scoloptoxin SSD43 from Scolopendra dehaani (Thai centipede).